The sequence spans 1103 residues: Voltage-dependent calcium channel subunit alpha-2/delta-1 (1103 aa).

Residues 1–24 form the signal peptide; the sequence is MAAGCLLALTLTLFQSGLIGPSSE. The Extracellular segment spans residues 25-1073; that stretch reads EPFPSPVTIK…VLEDYTDCGG (1049 aa). An N-linked (GlcNAc...) asparagine glycan is attached at Asn-92. Ser-119 bears the Phosphoserine mark. N-linked (GlcNAc...) asparagine glycans are attached at residues Asn-136 and Asn-184. The 178-residue stretch at 253–430 folds into the VWFA domain; that stretch reads DMLILVDVSG…INTQEYLDVL (178 aa). The a divalent metal cation site is built by Asp-259, Ser-261, and Ser-263. The short motif at 259-263 is the MIDAS-like motif element; sequence DVSGS. Residues Asn-324 and Asn-348 are each glycosylated (N-linked (GlcNAc...) asparagine). Cys-404 and Cys-1059 form a disulfide bridge. The Cache domain occupies 446–537; that stretch reads WTNVYLDALE…QPKPIGVGIP (92 aa). Residues Asn-613, Asn-781, and Asn-888 are each glycosylated (N-linked (GlcNAc...) asparagine). A helical transmembrane segment spans residues 1074-1094; it reads VSGLNPSLWSIFGLQFILLWL. Topologically, residues 1095–1103 are cytoplasmic; that stretch reads VSGSRHYLL.

The protein belongs to the calcium channel subunit alpha-2/delta family. As to quaternary structure, dimer formed of alpha-2-1 and delta-1 chains; disulfide-linked. Voltage-dependent calcium channels are multisubunit complexes, consisting of alpha-1 (CACNA1), alpha-2 (CACNA2D), beta (CACNB) and delta (CACNA2D) subunits in a 1:1:1:1 ratio. In terms of processing, proteolytically processed into subunits alpha-2-1 and delta-1 that are disulfide-linked. As to expression, isoform 2A is expressed in skeletal muscle and aorta. Isoform 2B is expressed in brain. Isoform 2C is expressed in heart. Isoform 2D is expressed in heart and smooth muscle. Isoform 2E is expressed in smooth muscle. All five isoforms are expressed in the cardiovascular system.

Its subcellular location is the membrane. The protein resides in the cell membrane. In terms of biological role, the alpha-2/delta subunit of voltage-dependent calcium channels regulates calcium current density and activation/inactivation kinetics of the calcium channel. Plays an important role in excitation-contraction coupling. The protein is Voltage-dependent calcium channel subunit alpha-2/delta-1 (Cacna2d1) of Mus musculus (Mouse).